The chain runs to 773 residues: Linolenate 9R-lipoxygenase (773 aa).

Positions Tyr-176–Ile-773 constitute a Lipoxygenase domain. Residues His-515, His-520, and Ile-773 each contribute to the Fe cation site.

It belongs to the lipoxygenase family.

The catalysed reaction is (9Z,12Z,15Z)-octadecatrienoate + O2 = (9R,10E,12Z,15Z)-9-hydroperoxyoctadeca-10,12,15-trienoate. It participates in lipid metabolism; oxylipin biosynthesis. Catalyzes the conversion of alpha-linoleate to (9R,10E,12Z,15Z)-9-hydroperoxyoctadeca-10,12,15-trienoate in oxylipin biosynthesis. Also converts alpha-linoleate to (9R,10E,12Z)-9-hydroperoxyoctadeca-10,12-dienoate. The polypeptide is Linolenate 9R-lipoxygenase (Nostoc sp. (strain PCC 7120 / SAG 25.82 / UTEX 2576)).